Here is a 154-residue protein sequence, read N- to C-terminus: Protein E6 (154 aa).

2 zinc fingers span residues 34–70 (CVFCKKALTASEVYNFAYTDLRVVYRDGYPYGVCKFC) and 107–143 (CYRCQHPLTPEEKQLHCDYKKRFHKISHMWTGSCLTC).

It belongs to the papillomaviridae E6 protein family. Forms homodimers. Interacts with ubiquitin-protein ligase UBE3A/E6-AP; this interaction stimulates UBE3A ubiquitin activity. Interacts with host TP53 and EP300; this interaction inhibits TP53 activity.

It is found in the host cytoplasm. The protein resides in the host nucleus. Plays a major role in the induction and maintenance of cellular transformation. E6 associates with host UBE3A/E6-AP ubiquitin-protein ligase and modulates its activity. Sequesters tumor suppressor TP53 in the host cytoplasm and modulates its activity by interacting with host EP300 that results in the reduction of TP53 acetylation and activation. In turn, apoptosis induced by DNA damage is inhibited. E6 also protects host keratinocytes from apoptosis by mediating the degradation of host BAK1. May also inhibit host immune response. The polypeptide is Protein E6 (Human papillomavirus type 53).